Consider the following 481-residue polypeptide: Argininosuccinate lyase (481 aa).

This sequence belongs to the lyase 1 family. Argininosuccinate lyase subfamily.

It localises to the cytoplasm. The catalysed reaction is 2-(N(omega)-L-arginino)succinate = fumarate + L-arginine. The protein operates within amino-acid biosynthesis; L-arginine biosynthesis; L-arginine from L-ornithine and carbamoyl phosphate: step 3/3. This is Argininosuccinate lyase from Methanococcus maripaludis (strain DSM 14266 / JCM 13030 / NBRC 101832 / S2 / LL).